Reading from the N-terminus, the 207-residue chain is Ribosomal RNA small subunit methyltransferase G (207 aa).

S-adenosyl-L-methionine-binding positions include glycine 75, leucine 80, 126 to 127 (VE), and arginine 141.

The protein belongs to the methyltransferase superfamily. RNA methyltransferase RsmG family.

Its subcellular location is the cytoplasm. It catalyses the reaction guanosine(527) in 16S rRNA + S-adenosyl-L-methionine = N(7)-methylguanosine(527) in 16S rRNA + S-adenosyl-L-homocysteine. Functionally, specifically methylates the N7 position of guanine in position 527 of 16S rRNA. This is Ribosomal RNA small subunit methyltransferase G from Psychromonas ingrahamii (strain DSM 17664 / CCUG 51855 / 37).